The following is a 127-amino-acid chain: MIVVDASAALAALLNDGQARQLIAAERLHVPHLVDSEIASGLRRLAQRDRLGAADGRRALQTWRRLAVTRYPVVGLFERIWEIRANLSAYDASYVALAEALNCALVTADLRLSDTGQAQCPITVVPR.

Residues 2-115 form the PINc domain; sequence IVVDASAALA…VTADLRLSDT (114 aa). Residues Asp5 and Asp91 each coordinate Mg(2+).

Belongs to the PINc/VapC protein family. Mg(2+) is required as a cofactor.

In terms of biological role, toxic component of a type II toxin-antitoxin (TA) system. An RNase. The cognate antitoxin is VapB9. The protein is Ribonuclease VapC9 of Mycobacterium tuberculosis (strain CDC 1551 / Oshkosh).